A 458-amino-acid polypeptide reads, in one-letter code: tRNA modification GTPase MnmE (458 aa).

(6S)-5-formyl-5,6,7,8-tetrahydrofolate is bound by residues Arg26, Glu88, and Arg127. The TrmE-type G domain maps to 224 to 378 (GLSTAIIGRP…IEERINDIFF (155 aa)). Residue Asn234 participates in K(+) binding. GTP is bound by residues 234–239 (NVGKSS), 253–259 (TDIEGTT), and 278–281 (DTAG). Ser238 contacts Mg(2+). K(+)-binding residues include Thr253, Ile255, and Thr258. Thr259 is a binding site for Mg(2+). Residue Lys458 participates in (6S)-5-formyl-5,6,7,8-tetrahydrofolate binding.

This sequence belongs to the TRAFAC class TrmE-Era-EngA-EngB-Septin-like GTPase superfamily. TrmE GTPase family. In terms of assembly, homodimer. Heterotetramer of two MnmE and two MnmG subunits. It depends on K(+) as a cofactor.

Its subcellular location is the cytoplasm. Its function is as follows. Exhibits a very high intrinsic GTPase hydrolysis rate. Involved in the addition of a carboxymethylaminomethyl (cmnm) group at the wobble position (U34) of certain tRNAs, forming tRNA-cmnm(5)s(2)U34. This Streptococcus agalactiae serotype III (strain NEM316) protein is tRNA modification GTPase MnmE.